A 552-amino-acid polypeptide reads, in one-letter code: Mothers against decapentaplegic homolog 4 (552 aa).

A mediates interaction with ZBTB7A region spans residues 1-322 (MDNMSITNTP…PISNHPAPEY (322 aa)). Residues 18–142 (SIVHSLMCHR…YERVVSPGID (125 aa)) form the MH1 domain. Lys37 bears the N6-acetyllysine mark. The required for interaction with TSC22D1 stretch occupies residues 44–69 (VKKLKEKKDELDSLITAITTNGAHPS). Zn(2+) is bound at residue Cys71. A Glycyl lysine isopeptide (Lys-Gly) (interchain with G-Cter in SUMO2) cross-link involves residue Lys113. Residues Cys115, Cys127, and His132 each coordinate Zn(2+). Disordered regions lie at residues 168 to 194 (GQPS…STET) and 236 to 256 (GLLQ…FTGQ). 2 stretches are compositionally biased toward polar residues: residues 170–194 (PSLS…STET) and 245–256 (QPGQQQNGFTGQ). The tract at residues 275–320 (PYTPNLPHHQNGHLQHHPPMPPHPGHYWPVHNELAFQPPISNHPAP) is SAD. The MH2 domain maps to 323-552 (WCSIAYFEMD…MPIADPQPLD (230 aa)). Residues Lys428 and Lys507 each carry the N6-acetyllysine modification. Residue Lys519 forms a Glycyl lysine isopeptide (Lys-Gly) (interchain with G-Cter in ubiquitin) linkage.

It belongs to the dwarfin/SMAD family. Monomer; in the absence of TGF-beta activation. Heterotrimer; on TGF-beta activation. Heterotrimer composed of two molecules of a C-terminally phosphorylated R-SMAD molecule, SMAD2 or SMAD3, and one molecule of SMAD4 to form the transcriptional active SMAD2/SMAD3-SMAD4 complex. Found in a ternary complex composed of SMAD4, STK11/LKB1 and STK11IP. Found in a complex with SMAD1 and YY1. Identified in a complex that contains at least ZNF451, SMAD2, SMAD3 and SMAD4. Interacts with ATF2, COPS5, DACH1, MSG1, SKI, STK11/LKB1, STK11IP and TRIM33. Associates with ZNF423 or ZNF521 in response to BMP2 leading to activate transcription of BMP target genes. Interacts with USP9X. Interacts (via the MH1 and MH2 domains) with RBPMS. Interacts with WWTR1 (via coiled-coil domain). Interacts with CITED1 and CITED2. Interacts with PDPK1 (via PH domain). Interacts with VPS39; this interaction affects heterodimer formation with SMAD3, but not with SMAD2, and leads to inhibition of SMAD3-dependent transcription activation. Interactions with VPS39 and SMAD2 may be mutually exclusive. Interacts (via MH2 domain) with ZNF451 (via N-terminal zinc-finger domains). Interacts with ZC3H3. Interacts weakly with ZNF8. Interacts with NUP93 and IPO7; translocates SMAD4 to the nucleus through the NPC upon BMP7 stimulation resulting in activation of SMAD4 signaling. Interacts with CREB3L1, the interaction takes place upon TGFB1 induction and SMAD4 acts as a CREB3L1 coactivator to induce the expression of genes involved in the assembly of collagen extracellular matrix. Interacts with DLX1. Interacts with ZBTB7A; the interaction is direct and stimulated by TGFB1. Interacts with CREBBP; the recruitment of this transcriptional coactivator is negatively regulated by ZBTB7A. Interacts with EP300; the interaction with this transcriptional coactivator is negatively regulated by ZBTB7A. Interacts with HDAC1. Interacts (via MH2 domain) with ZMIZ1 (via SP-RING-type domain); in the TGF-beta signaling pathway increases the activity of the SMAD3/SMAD4 transcriptional complex. Interacts (via N-terminus) with TSC22D1. Phosphorylated by PDPK1. Post-translationally, monoubiquitinated on Lys-519 by E3 ubiquitin-protein ligase TRIM33. Monoubiquitination hampers its ability to form a stable complex with activated SMAD2/3 resulting in inhibition of TGF-beta/BMP signaling cascade. Deubiquitination by USP9X restores its competence to mediate TGF-beta signaling.

It localises to the cytoplasm. It is found in the nucleus. In terms of biological role, in muscle physiology, plays a central role in the balance between atrophy and hypertrophy. When recruited by MSTN, promotes atrophy response via phosphorylated SMAD2/4. MSTN decrease causes SMAD4 release and subsequent recruitment by the BMP pathway to promote hypertrophy via phosphorylated SMAD1/5/8. Acts synergistically with SMAD1 and YY1 in bone morphogenetic protein (BMP)-mediated cardiac-specific gene expression. Binds to SMAD binding elements (SBEs) (5'-GTCT/AGAC-3') within BMP response element (BMPRE) of cardiac activating regions. Common SMAD (co-SMAD) is the coactivator and mediator of signal transduction by TGF-beta (transforming growth factor). Component of the heterotrimeric SMAD2/SMAD3-SMAD4 complex that forms in the nucleus and is required for the TGF-mediated signaling. Promotes binding of the SMAD2/SMAD4/FAST-1 complex to DNA and provides an activation function required for SMAD1 or SMAD2 to stimulate transcription. Component of the multimeric SMAD3/SMAD4/JUN/FOS complex which forms at the AP1 promoter site; required for synergistic transcriptional activity in response to TGF-beta. May act as a tumor suppressor. Positively regulates PDPK1 kinase activity by stimulating its dissociation from the 14-3-3 protein YWHAQ which acts as a negative regulator. The sequence is that of Mothers against decapentaplegic homolog 4 (SMAD4) from Homo sapiens (Human).